Reading from the N-terminus, the 832-residue chain is Protein P (832 aa).

A terminal protein domain (TP) region spans residues 1–177 (MPLSYQHFRK…FCGSPYSWEQ (177 aa)). The interval 178 to 335 (ELQHGAESFN…HCLSHLVNLL (158 aa)) is spacer. Polar residues-rich tracts occupy residues 205–220 (SKHQ…QQGQ) and 251–263 (SGHN…ESAS). The interval 205 to 263 (SKHQQSRLGLQPQQGQLAKGQRGRSGSVRSRAHSATRRSVGVEPSGSGHNNNSASESAS) is disordered. A polymerase/reverse transcriptase domain (RT) region spans residues 336–679 (EDWGPCTEHG…YATLYPVARQ (344 aa)). The region spanning 346 to 589 (KHHIRIPRTP…YSLNFMGYVI (244 aa)) is the Reverse transcriptase domain. The Mg(2+) site is built by aspartate 418, aspartate 540, and aspartate 541.

It belongs to the hepadnaviridae P protein family.

It catalyses the reaction DNA(n) + a 2'-deoxyribonucleoside 5'-triphosphate = DNA(n+1) + diphosphate. It carries out the reaction Endonucleolytic cleavage to 5'-phosphomonoester.. With respect to regulation, activated by host HSP70 and HSP40 in vitro to be able to bind the epsilon loop of the pgRNA. Because deletion of the RNase H region renders the protein partly chaperone-independent, the chaperones may be needed indirectly to relieve occlusion of the RNA-binding site by this domain. Inhibited by several reverse-transcriptase inhibitors: Lamivudine, Adefovir and Entecavir. Functionally, multifunctional enzyme that converts the viral RNA genome into dsDNA in viral cytoplasmic capsids. This enzyme displays a DNA polymerase activity that can copy either DNA or RNA templates, and a ribonuclease H (RNase H) activity that cleaves the RNA strand of RNA-DNA heteroduplexes in a partially processive 3'- to 5'-endonucleasic mode. Neo-synthesized pregenomic RNA (pgRNA) are encapsidated together with the P protein, and reverse-transcribed inside the nucleocapsid. Initiation of reverse-transcription occurs first by binding the epsilon loop on the pgRNA genome, and is initiated by protein priming, thereby the 5'-end of (-)DNA is covalently linked to P protein. Partial (+)DNA is synthesized from the (-)DNA template and generates the relaxed circular DNA (RC-DNA) genome. After budding and infection, the RC-DNA migrates in the nucleus, and is converted into a plasmid-like covalently closed circular DNA (cccDNA). The activity of P protein does not seem to be necessary for cccDNA generation, and is presumably released from (+)DNA by host nuclear DNA repair machinery. This Gorilla gorilla (western gorilla) protein is Protein P.